The chain runs to 779 residues: Probable ATP-dependent RNA helicase DHX40 (779 aa).

Positions 1-53 (MSRFPAVAGRAPRRQEEGERSRDLQEERPSAVCIADREEKGCTSQEGGTTPTF) are disordered. Residues 13 to 41 (RRQEEGERSRDLQEERPSAVCIADREEKG) are compositionally biased toward basic and acidic residues. Over residues 42 to 53 (CTSQEGGTTPTF) the composition is skewed to polar residues. In terms of domain architecture, Helicase ATP-binding spans 63–231 (IQAVRDNSFL…FGNCPIFDIP (169 aa)). 76 to 83 (GNTGSGKT) is an ATP binding site. Residues 173–176 (DEAH) carry the DEAH box motif. In terms of domain architecture, Helicase C-terminal spans 263 to 442 (TMDIHLNEMA…SVVLTLKCLA (180 aa)). The tract at residues 737–779 (SKDVLKKMQRRNDDKSISDARARFLERKQQRTQDHSDTRKETG) is disordered.

The protein belongs to the DEAD box helicase family. DEAH subfamily.

The catalysed reaction is ATP + H2O = ADP + phosphate + H(+). Functionally, probable ATP-dependent RNA helicase. The polypeptide is Probable ATP-dependent RNA helicase DHX40 (DHX40) (Pongo abelii (Sumatran orangutan)).